A 232-amino-acid polypeptide reads, in one-letter code: Zinc import ATP-binding protein ZnuC (232 aa).

The ABC transporter domain maps to 5–220; the sequence is VNLKNIFVFY…PSFIEMFGCY (216 aa). 37-44 contacts ATP; sequence GPNGSGKS.

The protein belongs to the ABC transporter superfamily. Zinc importer (TC 3.A.1.15.5) family. The complex is composed of two ATP-binding proteins (ZnuC), two transmembrane proteins (ZnuB) and a solute-binding protein (ZnuA).

The protein localises to the cell membrane. The catalysed reaction is Zn(2+)(out) + ATP(in) + H2O(in) = Zn(2+)(in) + ADP(in) + phosphate(in) + H(+)(in). In terms of biological role, part of the ABC transporter complex ZnuABC involved in zinc import. Responsible for energy coupling to the transport system. The polypeptide is Zinc import ATP-binding protein ZnuC (Wigglesworthia glossinidia brevipalpis).